Reading from the N-terminus, the 88-residue chain is MALKERVGTVVSDKMDKTVVVAVENRFPHPIYQKTVSRTTRYKAHDEDNACRVGDRVRITETRPLSRHKRWAIAEVLSQSPKAEEVTK.

This sequence belongs to the universal ribosomal protein uS17 family. As to quaternary structure, part of the 30S ribosomal subunit.

One of the primary rRNA binding proteins, it binds specifically to the 5'-end of 16S ribosomal RNA. This chain is Small ribosomal subunit protein uS17, found in Synechococcus sp. (strain CC9311).